A 438-amino-acid polypeptide reads, in one-letter code: Putative pectate lyase 14 (438 aa).

Positions 1 to 26 are cleaved as a signal peptide; the sequence is MVVARTLFSISATLIIFLALFLHVNA. 3 N-linked (GlcNAc...) asparagine glycosylation sites follow: N40, N46, and N73. Residues D236, D260, and D264 each contribute to the Ca(2+) site. R316 is a catalytic residue.

It belongs to the polysaccharide lyase 1 family. Requires Ca(2+) as cofactor.

It carries out the reaction Eliminative cleavage of (1-&gt;4)-alpha-D-galacturonan to give oligosaccharides with 4-deoxy-alpha-D-galact-4-enuronosyl groups at their non-reducing ends.. Its pathway is glycan metabolism; pectin degradation; 2-dehydro-3-deoxy-D-gluconate from pectin: step 2/5. This Arabidopsis thaliana (Mouse-ear cress) protein is Putative pectate lyase 14.